We begin with the raw amino-acid sequence, 236 residues long: uncharacterized protein (236 aa).

The helical transmembrane segment at 52 to 72 (FFPYIALFQIIMLIILLILYF) threads the bilayer. The tract at residues 183–236 (SDKREHDDEELSFTTEMETITTETETSSTIPHLRSLPIKSESSMETTSEETDEE) is disordered. Residues 196-212 (TTEMETITTETETSSTI) show a composition bias toward low complexity.

Its subcellular location is the membrane. This is an uncharacterized protein from Acheta domesticus (House cricket).